The following is a 392-amino-acid chain: MTLLGTALRPAATRVMLLGSGELGKEVAIECQRLGVEVIAVDRYADAPAMHVAHRSHVINMLDGDALRRVVELEKPHYIVPEIEAIATDMLIQLEEERLNVVPCARATKLTMNREGIRRLAAEELQLPTSTYRFADSESLFREAVADIGYPCIVKPVMSSSGKGQTFIRSAEQLAQAWKYAQQGGRAGAGRVIVEGVVKFDFEITLLTVSAVDGVHFCAPVGHRQEDGDYRESWQPQQMSPLALERAQEIARKVVLALGGYGLFGVELFVCSDEVIFSEVSPRPHDTGMVTLISQDLSEFALHVRAFLGLPVGGIRQYGPAASAVILPQLTSQNVTFDNVQNAVGADLQIRLFGKPEIDGSRRLGVALATAESVVDAIERAKHAAGQVKVQG.

N(1)-(5-phospho-beta-D-ribosyl)glycinamide is bound by residues 22–23 and Glu82; that span reads EL. ATP is bound by residues Arg114, Lys155, 160 to 165, 195 to 198, and Glu203; these read SSGKGQ and EGVV. Residues 119 to 308 enclose the ATP-grasp domain; the sequence is RLAAEELQLP…EFALHVRAFL (190 aa). Glu267 and Glu279 together coordinate Mg(2+). Residues Asp286, Lys355, and 362 to 363 contribute to the N(1)-(5-phospho-beta-D-ribosyl)glycinamide site; that span reads RR.

Belongs to the PurK/PurT family. Homodimer.

The catalysed reaction is N(1)-(5-phospho-beta-D-ribosyl)glycinamide + formate + ATP = N(2)-formyl-N(1)-(5-phospho-beta-D-ribosyl)glycinamide + ADP + phosphate + H(+). It functions in the pathway purine metabolism; IMP biosynthesis via de novo pathway; N(2)-formyl-N(1)-(5-phospho-D-ribosyl)glycinamide from N(1)-(5-phospho-D-ribosyl)glycinamide (formate route): step 1/1. In terms of biological role, involved in the de novo purine biosynthesis. Catalyzes the transfer of formate to 5-phospho-ribosyl-glycinamide (GAR), producing 5-phospho-ribosyl-N-formylglycinamide (FGAR). Formate is provided by PurU via hydrolysis of 10-formyl-tetrahydrofolate. The protein is Formate-dependent phosphoribosylglycinamide formyltransferase of Shigella boydii serotype 4 (strain Sb227).